A 510-amino-acid polypeptide reads, in one-letter code: RanBP-type and C3HC4-type zinc finger-containing protein 1 (510 aa).

M1 carries the N-acetylmethionine modification. The interval 1–220 is interaction with IRF3; the sequence is MDEKTKKAEE…PGCEMCCRAR (220 aa). Positions 1 to 270 are interaction with TAB2; sequence MDEKTKKAEE…NYLQHVQLDQ (270 aa). At S50 the chain carries Phosphoserine. The Ubiquitin-like domain occupies 55 to 119; that stretch reads IRLWVSVEDA…DQETLHSHGV (65 aa). The interval 69-131 is interaction with RNF31; the sequence is VTIWLTVRPD…NGDSAYLYLL (63 aa). A disordered region spans residues 160-192; that stretch reads LTLQPRGPLEPGPPKPGVPQEPGRGQPDAVPEP. The span at 167-178 shows a compositional bias: pro residues; sequence PLEPGPPKPGVP. The segment at 193–222 adopts a RanBP2-type zinc-finger fold; it reads PPVGWQCPGCTFINKPTRPGCEMCCRARPE. Positions 233 to 261 form a coiled coil; the sequence is DEEERARLAGEEEALRQYQQRKQQQQEGN. The interval 278 to 506 is TRIAD supradomain; sequence EPAECPVCYS…VNGIPCHPSC (229 aa). Zn(2+) contacts are provided by C282, C285, C300, H302, C305, C308, and C323. An RING-type 1 zinc finger spans residues 282–332; sequence CPVCYSVLAPGEAVVLRECLHTFCRECLQGTIRNSQEAEVSCPFIDNTYSC. Y330 carries the post-translational modification Phosphotyrosine. Zn(2+) contacts are provided by C332, C371, C376, C391, C394, C399, C402, H406, C411, C447, and C450. Residues 351-411 form an IBR-type zinc finger; the sequence is QRFLDLGISI…CKAIHEQMNC (61 aa). The RING-type 2; atypical zinc finger occupies 447–476; the sequence is CPQCQIVVQKKDGCDWIRCTVCHTEICWVT. The active site involves C460. Zn(2+) is bound by residues C465 and C468.

It belongs to the RBR family. In terms of assembly, component of the LUBAC complex (linear ubiquitin chain assembly complex) which consists of SHARPIN, RBCK1 and RNF31. LUBAC has a MW of approximately 600 kDa suggesting a heteromultimeric assembly of its subunits. Interacts with beta-I-type (PRKCB1) and zeta-type protein kinase C (PRKCZ). Interacts with UBE2L3. Interacts with PRKCH. Associates with the TNF-R1 signaling complex (TNF-RSC) in a stimulation-dependent manner. Interacts with EYA1, TAB2, TAB3, MAP3K7 TRAF6 and RIPK1. Interacts with IRF3. As to quaternary structure, interacts with IREB2 only in iron-rich conditions. (Microbial infection) Interacts with hepatitis B virus/HBV protein HBx; this interaction is required to activate transcription of the viral genome. Post-translationally, auto-ubiquitinated. Auto-ubiquitination leads to degradation by the proteasome. Phosphorylated. In vitro, phosphorylation inhibits auto-ubiquitination activity. In terms of processing, (Microbial infection) Ubiquitinated by S.flexneri E3 ubiquitin-protein ligases IpaH1.4 and IpaH2.5, leading to its degradation by the proteasome, thereby preventing formation of the bacterial ubiquitin coat and activation of innate immunity.

The enzyme catalyses [E2 ubiquitin-conjugating enzyme]-S-ubiquitinyl-L-cysteine + [acceptor protein]-L-lysine = [E2 ubiquitin-conjugating enzyme]-L-cysteine + [acceptor protein]-N(6)-ubiquitinyl-L-lysine.. It functions in the pathway protein modification; protein ubiquitination. In terms of biological role, E3 ubiquitin-protein ligase, which accepts ubiquitin from specific E2 ubiquitin-conjugating enzymes, such as UBE2L3/UBCM4, and then transfers it to substrates. Functions as an E3 ligase for oxidized IREB2 and both heme and oxygen are necessary for IREB2 ubiquitination. Promotes ubiquitination of TAB2 and IRF3 and their degradation by the proteasome. Component of the LUBAC complex which conjugates linear ('Met-1'-linked) polyubiquitin chains to substrates and plays a key role in NF-kappa-B activation and regulation of inflammation. LUBAC conjugates linear polyubiquitin to IKBKG and RIPK1 and is involved in activation of the canonical NF-kappa-B and the JNK signaling pathways. Linear ubiquitination mediated by the LUBAC complex interferes with TNF-induced cell death and thereby prevents inflammation. LUBAC is recruited to the TNF-R1 signaling complex (TNF-RSC) following polyubiquitination of TNF-RSC components by BIRC2 and/or BIRC3 and to conjugate linear polyubiquitin to IKBKG and possibly other components contributing to the stability of the complex. The LUBAC complex is also involved in innate immunity by conjugating linear polyubiquitin chains at the surface of bacteria invading the cytosol to form the ubiquitin coat surrounding bacteria. LUBAC is not able to initiate formation of the bacterial ubiquitin coat, and can only promote formation of linear polyubiquitins on pre-existing ubiquitin. The bacterial ubiquitin coat acts as an 'eat-me' signal for xenophagy and promotes NF-kappa-B activation. Together with OTULIN, the LUBAC complex regulates the canonical Wnt signaling during angiogenesis. Binds polyubiquitin of different linkage types. The chain is RanBP-type and C3HC4-type zinc finger-containing protein 1 (RBCK1) from Homo sapiens (Human).